The chain runs to 340 residues: Methionine import ATP-binding protein MetN 1 (340 aa).

The ABC transporter domain maps to 2-242 (IRLENVSVDF…PQHAYTKQLV (241 aa)). Position 39-46 (39-46 (GTSGAGKS)) interacts with ATP.

This sequence belongs to the ABC transporter superfamily. Methionine importer (TC 3.A.1.24) family. In terms of assembly, the complex is composed of two ATP-binding proteins (MetN), two transmembrane proteins (MetI) and a solute-binding protein (MetQ).

The protein resides in the cell inner membrane. It carries out the reaction L-methionine(out) + ATP + H2O = L-methionine(in) + ADP + phosphate + H(+). The enzyme catalyses D-methionine(out) + ATP + H2O = D-methionine(in) + ADP + phosphate + H(+). Its function is as follows. Part of the ABC transporter complex MetNIQ involved in methionine import. Responsible for energy coupling to the transport system. This chain is Methionine import ATP-binding protein MetN 1, found in Pectobacterium atrosepticum (strain SCRI 1043 / ATCC BAA-672) (Erwinia carotovora subsp. atroseptica).